A 349-amino-acid polypeptide reads, in one-letter code: Isopentenyl-diphosphate delta-isomerase (349 aa).

A substrate-binding site is contributed by 9–10 (RK). FMN-binding positions include 65-67 (AMT), Ser-95, and Asn-124. Substrate is bound at residue 95–97 (STH). Gln-154 contacts substrate. Residue Glu-155 participates in Mg(2+) binding. FMN-binding positions include Lys-186, Ser-211, Thr-216, 262 to 264 (GLR), and 283 to 284 (SR).

This sequence belongs to the IPP isomerase type 2 family. In terms of assembly, homooctamer. Dimer of tetramers. FMN serves as cofactor. It depends on NADPH as a cofactor. Mg(2+) is required as a cofactor.

The protein resides in the cytoplasm. It catalyses the reaction isopentenyl diphosphate = dimethylallyl diphosphate. In terms of biological role, involved in the biosynthesis of isoprenoids. Catalyzes the 1,3-allylic rearrangement of the homoallylic substrate isopentenyl (IPP) to its allylic isomer, dimethylallyl diphosphate (DMAPP). This is Isopentenyl-diphosphate delta-isomerase from Staphylococcus aureus (strain JH1).